A 1256-amino-acid chain; its full sequence is Protein flightless-1 (1256 aa).

LRR repeat units follow at residues 4–28 (LPFVRGVDFTKNDFSATFPSSMRQM), 29–51 (SRVQWLTLDRTQLAEIPEELGHL), 52–74 (QKLEHLSLNHNRLEKIFGELTEL), 75–99 (SCLRSLDLRHNQLKNSGIPPELFHL), 100–122 (EELTTLDLSHNKLKEVPEGLERA), 124–145 (NLIVLNLSNNQIESIPTPLFIH), 147–169 (TDLLFLDLSHNRLETLPPQTRRL), 171–192 (NLKTLDLSHNPLELFQLRQLPS), 218–241 (LANLCELDLSHNSLPKLPDCVYNV), 243–264 (TLVRLNLSDNELTELTAGVELW), 265–287 (QRLESLNLSRNQLVALPAALCKL), 289–312 (KLRRLLVNDNKLNFEGIPSGIGKL), 313–335 (GALEVFSAANNLLEMVPEGLCRC), 336–358 (GALKQLNLSCNRLITLPDAIHLL), and 360–381 (GLDQLDLRNNPELVMPPKPSEA). A disordered region spans residues 405–476 (AAVPPSMPSS…ESLKPKRWDE (72 aa)). The span at 431–476 (PRSEGDQDAAKVLKGMKDVAKDKDNEAGAVPEDGKPESLKPKRWDE) shows a compositional bias: basic and acidic residues. Gelsolin-like repeat units lie at residues 512 to 589 (IEEV…EQFL), 633 to 703 (EPVA…AEFW), 749 to 822 (VELP…MQIF), and 1168 to 1242 (EKCA…SRRF).

The protein belongs to the villin/gelsolin family. In terms of tissue distribution, found in ovaries, larval fat bodies, brain and adult thorax.

Its function is as follows. May play a key role in embryonic cellularization by interacting with both the cytoskeleton and other cellular components. Alternatively, it may play a structural role in indirect flight muscle. Vital for embryonic development. The chain is Protein flightless-1 (fliI) from Drosophila melanogaster (Fruit fly).